A 303-amino-acid polypeptide reads, in one-letter code: Putative ankyrin repeat protein R601 (303 aa).

ANK repeat units lie at residues 86 to 115, 117 to 146, 147 to 176, and 200 to 233; these read DDNM…DVTV, NNFA…DITV, DNYF…NVDS, and NADV…DVSY.

The polypeptide is Putative ankyrin repeat protein R601 (Acanthamoeba polyphaga (Amoeba)).